The sequence spans 23 residues: GCRQCGGGCNKHGKCINGKCKCY.

Cystine bridges form between C2/C15, C5/C20, and C9/C22. The interval 13 to 20 (GKCINGKC) is interaction with Ca(2+)-activated K(+) channels. Y23 carries the post-translational modification Tyrosine amide.

Expressed by the venom gland.

The protein localises to the secreted. Functionally, blocks the potassium channel Shaker B. This chain is Potassium channel toxin alpha-KTx 13.4, found in Tityus stigmurus (Brazilian scorpion).